Consider the following 412-residue polypeptide: Branched-chain alpha-ketoacid dehydrogenase kinase (412 aa).

A mitochondrion-targeting transit peptide spans 1 to 30 (MILASVLRSGPGGGLPLRPLLGPALALRAR). The residue at position 31 (Ser31) is a Phosphoserine. Ser52 carries the phosphoserine; by autocatalysis modification. The 246-residue stretch at 159–404 (LDDHKDVVTL…DVYLRLRHID (246 aa)) folds into the Histidine kinase domain. 2 positions are modified to N6-acetyllysine: Lys192 and Lys233. 2 residues coordinate ATP: Asn279 and Asp315. Asn279 contributes to the Mg(2+) binding site. Val328, Asp330, and Phe333 together coordinate K(+). ATP-binding residues include Thr334 and Thr335. Phosphoserine occurs at positions 356 and 360. His364, Gly367, and Leu370 together coordinate ATP. K(+) is bound at residue Gly367.

The protein belongs to the PDK/BCKDK protein kinase family. As to quaternary structure, homodimer. Homotetramer. Dimerizes through interaction of two opposing nucleotide-binding domains. Interacts with E2 component of the branched-chain alpha-ketoacid dehydrogenase (BCKDH) complex. Competes with BCKDK for binding to the E2 component; this interaction is modulated by branched-chain alpha-keto acids. At steady state, BCKDH holoenzyme contains BCKDK and BCKDHA is phosphorylated. In response to high levels of branched-chain alpha-keto acids, the inhibitory BCKDK is replaced by activating PPM1K leading to BCKDHA dephosphorylation and BCAA degradation. In terms of processing, autophosphorylated. Ubiquitous.

Its subcellular location is the mitochondrion matrix. It carries out the reaction L-seryl-[3-methyl-2-oxobutanoate dehydrogenase] + ATP = O-phospho-L-seryl-[3-methyl-2-oxobutanoate dehydrogenase] + ADP + H(+). It catalyses the reaction L-seryl-[protein] + ATP = O-phospho-L-seryl-[protein] + ADP + H(+). Its pathway is protein modification. With respect to regulation, allosterically inhibited by certain thiazoles and thiophenes: thiazoles increase interaction with DBT/BCKDH-E2, whereas thiophenes reduce this interaction. Inhibited by 3,6- dichlorobenzo[b]thiophene-2-carboxylic acid (BT2). The ATP binding is mediated by both potassium and magnesium ions. Its function is as follows. Serine/threonine-protein kinase component of macronutrients metabolism. Forms a functional kinase and phosphatase pair with PPM1K, serving as a metabolic regulatory node that coordinates branched-chain amino acids (BCAAs) with glucose and lipid metabolism via two distinct phosphoprotein targets: mitochondrial BCKDHA subunit of the branched-chain alpha-ketoacid dehydrogenase (BCKDH) complex and cytosolic ACLY, a lipogenic enzyme of Krebs cycle. Phosphorylates and inactivates mitochondrial BCKDH complex a multisubunit complex consisting of three multimeric components each involved in different steps of BCAA catabolism: E1 composed of BCKDHA and BCKDHB, E2 core composed of DBT monomers, and E3 composed of DLD monomers. Associates with the E2 component of BCKDH complex and phosphorylates BCKDHA on Ser-337, leading to conformational changes that interrupt substrate channeling between E1 and E2 and inactivates the BCKDH complex. Phosphorylates ACLY on Ser-455 in response to changes in cellular carbohydrate abundance such as occurs during fasting to feeding metabolic transition. Refeeding stimulates MLXIPL/ChREBP transcription factor, leading to increased BCKDK to PPM1K expression ratio, phosphorylation and activation of ACLY that ultimately results in the generation of malonyl-CoA and oxaloacetate immediate substrates of de novo lipogenesis and glucogenesis, respectively. Recognizes phosphosites having SxxE/D canonical motif. In Homo sapiens (Human), this protein is Branched-chain alpha-ketoacid dehydrogenase kinase.